Here is a 329-residue protein sequence, read N- to C-terminus: Probable ABC transporter permease protein MG188 (329 aa).

6 consecutive transmembrane segments (helical) span residues 30-50 (FLLF…PFFL), 96-116 (LISL…IVFV), 128-148 (VFFL…VYIF), 176-196 (ALWA…VLII), 234-254 (LIFL…LALF), and 283-303 (NLAG…GLVL). Positions 88-303 (LRNSFLYSLI…VLGVCYGLVL (216 aa)) constitute an ABC transmembrane type-1 domain.

It belongs to the binding-protein-dependent transport system permease family. MalFG subfamily.

It localises to the cell membrane. Probably part of a binding-protein-dependent transport system. Probably responsible for the translocation of the substrate across the membrane. In Mycoplasma genitalium (strain ATCC 33530 / DSM 19775 / NCTC 10195 / G37) (Mycoplasmoides genitalium), this protein is Probable ABC transporter permease protein MG188.